We begin with the raw amino-acid sequence, 530 residues long: Carbohydrate sulfotransferase 2 (530 aa).

The disordered stretch occupies residues methionine 1–alanine 20. The Cytoplasmic portion of the chain corresponds to methionine 1–lysine 54. Residues alanine 8 to alanine 20 are compositionally biased toward pro residues. Residues alanine 55–aspartate 75 form a helical; Signal-anchor for type II membrane protein membrane-spanning segment. Residues tyrosine 76–leucine 530 are Lumenal-facing. The interval glycine 97–proline 128 is disordered. Tryptophan 173–phenylalanine 179 contacts 3'-phosphoadenylyl sulfate. Asparagine 243 carries N-linked (GlcNAc...) asparagine glycosylation. Arginine 332–serine 340 is a 3'-phosphoadenylyl sulfate binding site. Residues asparagine 457 and asparagine 475 are each glycosylated (N-linked (GlcNAc...) asparagine).

It belongs to the sulfotransferase 1 family. Gal/GlcNAc/GalNAc subfamily. As to quaternary structure, homodimer; disulfide-linked. Homodimerization is not essential for enzyme activity. In terms of tissue distribution, in brain, it is expressed in pyramidal cells in the CA3 subregion of the hippocampus, cerebellar nucleus and Purkinje cells. Expressed in peripheral lymph nodes.

It is found in the golgi apparatus. The protein localises to the trans-Golgi network membrane. The enzyme catalyses 3-O-{N-acetyl-beta-D-glucosaminyl-(1-&gt;3)-beta-D-galactosyl-(1-&gt;3)-N-acetyl-alpha-D-galactosaminyl}-L-threonyl-[protein] + 3'-phosphoadenylyl sulfate = 3-O-{6-O-sulfo-N-acetyl-beta-D-glucosaminyl-(1-&gt;3)-beta-D-galactosyl-(1-&gt;3)-N-acetyl-alpha-D-galactosaminyl}-L-threonyl-[protein] + adenosine 3',5'-bisphosphate + H(+). The catalysed reaction is 3-O-{N-acetyl-beta-D-glucosaminyl-(1-&gt;3)-beta-D-galactosyl-(1-&gt;3)-N-acetyl-alpha-D-galactosaminyl}-L-seryl-[protein] + 3'-phosphoadenylyl sulfate = 3-O-{6-O-sulfo-N-acetyl-beta-D-glucosaminyl-(1-&gt;3)-beta-D-galactosyl-(1-&gt;3)-N-acetyl-alpha-D-galactosaminyl}-L-seryl-[protein] + adenosine 3',5'-bisphosphate + H(+). It catalyses the reaction a 3-O-{beta-D-galactosyl-(1-&gt;3)-[N-acetyl-beta-D-glucosaminyl-(1-&gt;6)]-N-acetyl-alpha-D-galactosaminyl}-L-threonyl-[protein] + 3'-phosphoadenylyl sulfate = 3-O-{beta-D-galactosyl-(1-&gt;3)-[6-O-sulfo-N-acetyl-beta-D-glucosaminyl-(1-&gt;6)]-N-acetyl-alpha-D-galactosaminyl}-L-threonyl-[protein] + adenosine 3',5'-bisphosphate + H(+). It carries out the reaction 3-O-{beta-D-galactosyl-(1-&gt;3)-[N-acetyl-beta-D-glucosaminyl-(1-&gt;6)]-N-acetyl-alpha-D-galactosaminyl}-L-seryl-[protein] + 3'-phosphoadenylyl sulfate = 3-O-{beta-D-galactosyl-(1-&gt;3)-[6-O-sulfo-N-acetyl-beta-D-glucosaminyl-(1-&gt;6)]-N-acetyl-alpha-D-galactosaminyl}-L-seryl-[protein] + adenosine 3',5'-bisphosphate + H(+). Its pathway is protein modification; carbohydrate sulfation. Functionally, sulfotransferase that utilizes 3'-phospho-5'-adenylyl sulfate (PAPS) as sulfonate donor to catalyze the transfer of sulfate to position 6 of non-reducing N-acetylglucosamine (GlcNAc) residues within keratan-like structures on N-linked glycans and within mucin-associated glycans that can ultimately serve as SELL ligands. SELL ligands are present in high endothelial cells (HEVs) and play a central role in lymphocyte homing at sites of inflammation. Participates in biosynthesis of the SELL ligand sialyl 6-sulfo Lewis X and in lymphocyte homing to Peyer patches. Has no activity toward O-linked sugars. Its substrate specificity may be influenced by its subcellular location. Sulfates GlcNAc residues at terminal, non-reducing ends of oligosaccharide chains. The sequence is that of Carbohydrate sulfotransferase 2 (Chst2) from Mus musculus (Mouse).